Here is a 463-residue protein sequence, read N- to C-terminus: Cysteine--tRNA ligase (463 aa).

Cysteine 28 serves as a coordination point for Zn(2+). The short motif at 30 to 40 (ITPYDLCHIGH) is the 'HIGH' region element. Residues cysteine 211, histidine 236, and glutamate 240 each coordinate Zn(2+). A 'KMSKS' region motif is present at residues 268–272 (KMSKS). Lysine 271 provides a ligand contact to ATP.

The protein belongs to the class-I aminoacyl-tRNA synthetase family. As to quaternary structure, monomer. Requires Zn(2+) as cofactor.

Its subcellular location is the cytoplasm. It catalyses the reaction tRNA(Cys) + L-cysteine + ATP = L-cysteinyl-tRNA(Cys) + AMP + diphosphate. This is Cysteine--tRNA ligase from Wigglesworthia glossinidia brevipalpis.